Here is a 97-residue protein sequence, read N- to C-terminus: Acylphosphatase (97 aa).

Positions 3–97 constitute an Acylphosphatase-like domain; sequence KVKMIVSGRV…PDFTDFNIKY (95 aa). Active-site residues include R18 and N36.

This sequence belongs to the acylphosphatase family.

It catalyses the reaction an acyl phosphate + H2O = a carboxylate + phosphate + H(+). The protein is Acylphosphatase (acyP) of Lactococcus lactis subsp. lactis (strain IL1403) (Streptococcus lactis).